Here is a 142-residue protein sequence, read N- to C-terminus: Cystatin-8 (142 aa).

Positions 1-21 are cleaved as a signal peptide; that stretch reads MPRCRWLSLILLTIPLALVAR. Asparagine 27 and asparagine 39 each carry an N-linked (GlcNAc...) asparagine glycan. The Secondary area of contact motif lies at 77–81; the sequence is QVTNL. 2 disulfides stabilise this stretch: cysteine 95–cysteine 105 and cysteine 119–cysteine 139.

The protein belongs to the cystatin family. Proximal caput region of the epididymis. Lower expression in the testis. Within the testis it is localized to the elongating spermatids, whereas within the epididymis it is exclusively synthesized by the proximal caput epithelium.

The protein localises to the secreted. Functionally, performs a specialized role during sperm development and maturation. The sequence is that of Cystatin-8 (CST8) from Homo sapiens (Human).